The primary structure comprises 247 residues: ATP synthase subunit a, chloroplastic (247 aa).

A run of 5 helical transmembrane segments spans residues 38-58, 95-115, 134-154, 199-219, and 220-240; these read QVLI…FIAV, VPFI…GALL, INTT…AGLS, LVVV…VMFL, and GLFT…AYIG.

It belongs to the ATPase A chain family. In terms of assembly, F-type ATPases have 2 components, CF(1) - the catalytic core - and CF(0) - the membrane proton channel. CF(1) has five subunits: alpha(3), beta(3), gamma(1), delta(1), epsilon(1). CF(0) has four main subunits: a, b, b' and c.

The protein resides in the plastid. It localises to the chloroplast thylakoid membrane. Key component of the proton channel; it plays a direct role in the translocation of protons across the membrane. The protein is ATP synthase subunit a, chloroplastic of Citrus sinensis (Sweet orange).